The following is a 209-amino-acid chain: Thymidine kinase (209 aa).

Residues alanine 9 to serine 16 and aspartate 88 to glutamine 91 contribute to the ATP site. Residue glutamate 89 is the Proton acceptor of the active site. The Zn(2+) site is built by cysteine 146, cysteine 148, cysteine 183, and histidine 186.

Belongs to the thymidine kinase family. In terms of assembly, homotetramer.

Its subcellular location is the cytoplasm. It catalyses the reaction thymidine + ATP = dTMP + ADP + H(+). This Legionella pneumophila subsp. pneumophila (strain Philadelphia 1 / ATCC 33152 / DSM 7513) protein is Thymidine kinase.